Here is a 92-residue protein sequence, read N- to C-terminus: Envelope glycoprotein J (92 aa).

The first 22 residues, 1-22 (MDRYAVRTWGIVGILGCAAVGA), serve as a signal peptide directing secretion. The Extracellular portion of the chain corresponds to 23-49 (APTGPASDTTNATARLPTHPPLIRSGG). Asparagine 33 is a glycosylation site (N-linked (GlcNAc...) asparagine; by host). Residues 50-70 (FAVPLIVGGLCLMILGMACLL) form a helical membrane-spanning segment. Residues 71 to 92 (EVLRRLGRELARCCPHAGQFAP) lie on the Cytoplasmic side of the membrane.

This sequence belongs to the alphaherpesvirinae glycoprotein J family.

It is found in the host Golgi apparatus membrane. It localises to the host endoplasmic reticulum membrane. Its subcellular location is the host endosome membrane. Functionally, functions as an activator of viral protein expression and virus production. In turn, promotes cell-to-cell spread as well as syncytia formation. This Homo sapiens (Human) protein is Envelope glycoprotein J (gJ).